Consider the following 209-residue polypeptide: Large ribosomal subunit protein uL3 (209 aa).

Positions 133–153 are disordered; sequence THGNSLSHRVPGSIGQNQTPG. Gln150 carries the post-translational modification N5-methylglutamine.

It belongs to the universal ribosomal protein uL3 family. In terms of assembly, part of the 50S ribosomal subunit. Forms a cluster with proteins L14 and L19. Post-translationally, methylated by PrmB.

One of the primary rRNA binding proteins, it binds directly near the 3'-end of the 23S rRNA, where it nucleates assembly of the 50S subunit. The chain is Large ribosomal subunit protein uL3 from Pectobacterium carotovorum subsp. carotovorum (strain PC1).